The primary structure comprises 142 residues: uncharacterized protein (142 aa).

The Cytoplasmic portion of the chain corresponds to 1 to 9 (MDMVSPVLN). Residues 10–30 (LQSSILGELVGIIGKVFFLLI) traverse the membrane as a helical segment. Topologically, residues 31-41 (EEIKYPIITPK) are extracellular. Residues 42–62 (IIVDAQISSWSLFFFASICNL) form a helical membrane-spanning segment. The Cytoplasmic segment spans residues 63 to 101 (SAKFREPIVTTSSIISLMESEKDLKNVNEYFQIMAKMLF). The chain crosses the membrane as a helical span at residues 102-122 (ILENKIVVSLFVVFNISVLII). Over 123–142 (VKSEPYSYGKVLFKPSSSIF) the chain is Extracellular.

The protein resides in the membrane. This is an uncharacterized protein from Saccharomyces cerevisiae (strain ATCC 204508 / S288c) (Baker's yeast).